The following is a 273-amino-acid chain: 4-hydroxy-tetrahydrodipicolinate reductase (273 aa).

NAD(+)-binding positions include 12–17 (GAGGRM) and Glu38. Arg39 is a binding site for NADP(+). Residues 102 to 104 (GTT) and 126 to 129 (AANF) each bind NAD(+). His159 (proton donor/acceptor) is an active-site residue. His160 contributes to the (S)-2,3,4,5-tetrahydrodipicolinate binding site. Residue Lys163 is the Proton donor of the active site. 169–170 (GT) contributes to the (S)-2,3,4,5-tetrahydrodipicolinate binding site.

Belongs to the DapB family. In terms of assembly, homotetramer.

It is found in the cytoplasm. The enzyme catalyses (S)-2,3,4,5-tetrahydrodipicolinate + NAD(+) + H2O = (2S,4S)-4-hydroxy-2,3,4,5-tetrahydrodipicolinate + NADH + H(+). It catalyses the reaction (S)-2,3,4,5-tetrahydrodipicolinate + NADP(+) + H2O = (2S,4S)-4-hydroxy-2,3,4,5-tetrahydrodipicolinate + NADPH + H(+). It functions in the pathway amino-acid biosynthesis; L-lysine biosynthesis via DAP pathway; (S)-tetrahydrodipicolinate from L-aspartate: step 4/4. Functionally, catalyzes the conversion of 4-hydroxy-tetrahydrodipicolinate (HTPA) to tetrahydrodipicolinate. The polypeptide is 4-hydroxy-tetrahydrodipicolinate reductase (Shigella boydii serotype 18 (strain CDC 3083-94 / BS512)).